A 222-amino-acid polypeptide reads, in one-letter code: MSAGSLGGRSRLDEQLERMTADFLSMQDTLAGQLRALQAAFAQGDTSVREEVERLDRDIDAANARIEGEALHLLARQSPVAHDLKLTLLILQSTPDLERAGDYAKHVARRLSALRAGTAGHPSEFAQALALLLQMATTLRAASSPMNAALAHEVRALDDQVDALYDRAVEQVLAGRPDAALADTLEASHAWRAAERLGDHLVNVAQRTERLLARPAPSDAPA.

It belongs to the PhoU family.

Its subcellular location is the cytoplasm. In terms of biological role, not known; probably involved in phosphate transport and/or metabolism. This is an uncharacterized protein from Deinococcus radiodurans (strain ATCC 13939 / DSM 20539 / JCM 16871 / CCUG 27074 / LMG 4051 / NBRC 15346 / NCIMB 9279 / VKM B-1422 / R1).